The sequence spans 314 residues: Secreted frizzled-related protein 1 (314 aa).

The N-terminal stretch at 1-31 (MGVGRSARGRGGAASGVLLALAAALLAAGSA) is a signal peptide. In terms of domain architecture, FZ spans 53 to 169 (TKPPQCVDIP…FPEGDVCIAM (117 aa)). 5 disulfides stabilise this stretch: C58/C121, C68/C114, C105/C140, C129/C166, and C133/C157. The N-linked (GlcNAc...) asparagine glycan is linked to N173. 3 disulfide bridges follow: C186-C256, C189-C258, and C203-C306. The 121-residue stretch at 186–306 (CPPCDNELKS…FMKRMKNHEC (121 aa)) folds into the NTR domain.

This sequence belongs to the secreted frizzled-related protein (sFRP) family. In terms of assembly, interacts with WNT8, WNT1, WNT2, WNT4 and FRZD6. Interacts with MYOC. Highly expressed in kidney and embryonic heart. Also highly expressed in the eye, where it is principally localized to the ciliary body and the lens epithelium. Weaker expression in heart, lung and brain. In the brain, is expressed exclusively in the choroid plexus.

Its subcellular location is the secreted. In terms of biological role, soluble frizzled-related proteins (sFRPS) function as modulators of Wnt signaling through direct interaction with Wnts. They have a role in regulating cell growth and differentiation in specific cell types. SFRP1 decreases intracellular beta-catenin levels. Has antiproliferative effects on vascular cells, in vitro and in vivo, and can induce, in vivo, an angiogenic response. In vascular cell cycle, delays the G1 phase and entry into the S phase. In kidney development, inhibits tubule formation and bud growth in metanephroi. Inhibits WNT1/WNT4-mediated TCF-dependent transcription. This is Secreted frizzled-related protein 1 from Mus musculus (Mouse).